A 397-amino-acid polypeptide reads, in one-letter code: MDALATSINQFALELSKKLAESAQGKNIFFSAWSISASLAMVHLGAKGNTAAQMAQVLQFKRDQGVKSDPESEKKRKTEFNLSNSGEIHCNFQTLISEILKPNNDYILKTANAAYSEKTYPFHNKYLEDVKTYFGAEPQSVNFVEASDQIRKEINSWVERQTEGKIQNLLSDDSVGSTTRMVLVNALYFKGIWEHQFLVQNTTEKPFRINETTSKPVQMMFMKEKLQIFHIEKPQALGLQLYYKSCDLSLFILLPEDINGLEQLEKAITYEKLSKWTSADMMEVYDVQLHLPKFKLEESYDLKSTLSSMGMSDAFSESEADFSGMSSARNLFLSNVFHKAFVEIDEQGTEAAAGSGSEISFRIKVPSIEFNANHPFLFFIRHNKTNNILFYGRFCSP.

Residues 74 to 77 carry the Nuclear localization signal motif; sequence KKRK.

Belongs to the serpin family. Ov-serpin subfamily.

The protein resides in the nucleus. It is found in the cytoplasm. Functionally, protease inhibitor that may play a role in the regulation of protease activities during hematopoiesis and apoptosis induced by TNF. May regulate protease activities in the cytoplasm and in the nucleus. The protein is Serpin B10 (SERPINB10) of Plecturocebus moloch (Dusky titi monkey).